Consider the following 72-residue polypeptide: Phaiodotoxin-3 (72 aa).

Positions 1–72 (KFIRHKDESF…CFGALESKCA (72 aa)) constitute an LCN-type CS-alpha/beta domain. Cystine bridges form between Cys13–Cys38, Cys23–Cys50, Cys27–Cys52, and Cys63–Cys71.

The protein belongs to the long (4 C-C) scorpion toxin superfamily. Sodium channel inhibitor family. In terms of tissue distribution, expressed by the venom gland.

The protein localises to the secreted. Sodium channel (Nav) specific neurotoxin. The chain is Phaiodotoxin-3 from Anuroctonus phaiodactylus (Mafia scorpion).